Consider the following 64-residue polypeptide: Weak toxin CM-9a (64 aa).

Cystine bridges form between cysteine 3-cysteine 24, cysteine 6-cysteine 11, cysteine 17-cysteine 41, cysteine 45-cysteine 56, and cysteine 57-cysteine 62.

It belongs to the three-finger toxin family. Ancestral subfamily. Orphan group II sub-subfamily. Expressed by the venom gland.

It is found in the secreted. In terms of biological role, binds with low affinity to muscular (alpha-1-beta-1-delta-epsilon/CHRNA1-CHRNB1-CHRND-CHRNE) and very low affinity to neuronal (alpha-7/CHRNA7) nicotinic acetylcholine receptor (nAChR). The polypeptide is Weak toxin CM-9a (Naja kaouthia (Monocled cobra)).